The sequence spans 99 residues: DNA-binding protein HU (99 aa).

A disordered region spans residues 63–82 (HRKEREGRNPKTGAKMKIDA).

This sequence belongs to the bacterial histone-like protein family. In terms of assembly, homodimer.

Histone-like DNA-binding protein which is capable of wrapping DNA to stabilize it, and thus to prevent its denaturation under extreme environmental conditions. This Rickettsia prowazekii (strain Madrid E) protein is DNA-binding protein HU (hup).